A 183-amino-acid chain; its full sequence is NADH-quinone oxidoreductase subunit I (183 aa).

2 4Fe-4S ferredoxin-type domains span residues 44 to 74 and 90 to 119; these read LNRWPDGLEKCIGCELCAWACPADAIYVEAG and RVYQINYLRCILCGLCVEACPTRALTMTNE. Residues C54, C57, C60, C64, C99, C102, C105, and C109 each contribute to the [4Fe-4S] cluster site. The interval 143-183 is disordered; sequence QGMEAPPHPMRLGETEKDYYRLGRDDNAAARADEQNSEAVQ. Basic and acidic residues predominate over residues 153-176; that stretch reads RLGETEKDYYRLGRDDNAAARADE.

Belongs to the complex I 23 kDa subunit family. NDH-1 is composed of 14 different subunits. Subunits NuoA, H, J, K, L, M, N constitute the membrane sector of the complex. The cofactor is [4Fe-4S] cluster.

Its subcellular location is the cell membrane. It carries out the reaction a quinone + NADH + 5 H(+)(in) = a quinol + NAD(+) + 4 H(+)(out). Functionally, NDH-1 shuttles electrons from NADH, via FMN and iron-sulfur (Fe-S) centers, to quinones in the respiratory chain. The immediate electron acceptor for the enzyme in this species is believed to be ubiquinone. Couples the redox reaction to proton translocation (for every two electrons transferred, four hydrogen ions are translocated across the cytoplasmic membrane), and thus conserves the redox energy in a proton gradient. The sequence is that of NADH-quinone oxidoreductase subunit I from Thermobifida fusca (strain YX).